The following is a 163-amino-acid chain: Large ribosomal subunit protein eL24y (163 aa).

Residues 119–133 (IKKTKDEKKAKKVEF) show a composition bias toward basic and acidic residues. The segment at 119-163 (IKKTKDEKKAKKVEFASKQQKVKANFPKAAAASKGPKVGGGGGKR) is disordered.

Belongs to the eukaryotic ribosomal protein eL24 family. Interacts with REIL1 and REIL2. Component of the large ribosomal subunit. In terms of tissue distribution, ubiquitous.

The protein resides in the cytoplasm. Its subcellular location is the nucleus. It is found in the nucleolus. The protein localises to the nucleoplasm. Might have an extraribosomal function in reinitiation of translation of ETTIN and MONOPTEROS genes that are involved in the auxin-mediated gynoecium patterning. Essential in leaf polarity establishment, probably having a role for translation in leaf dorsoventral patterning to specify leaf adaxial identity. The protein is Large ribosomal subunit protein eL24y of Arabidopsis thaliana (Mouse-ear cress).